A 111-amino-acid polypeptide reads, in one-letter code: Iron-sulfur cluster assembly protein CyaY (111 aa).

The protein belongs to the frataxin family.

Its function is as follows. Involved in iron-sulfur (Fe-S) cluster assembly. May act as a regulator of Fe-S biogenesis. The polypeptide is Iron-sulfur cluster assembly protein CyaY (Cupriavidus pinatubonensis (strain JMP 134 / LMG 1197) (Cupriavidus necator (strain JMP 134))).